A 297-amino-acid polypeptide reads, in one-letter code: Acetylglutamate kinase (297 aa).

Residues 68–69, Arg90, and Asn195 each bind substrate; that span reads GG.

Belongs to the acetylglutamate kinase family. ArgB subfamily.

The protein localises to the cytoplasm. It catalyses the reaction N-acetyl-L-glutamate + ATP = N-acetyl-L-glutamyl 5-phosphate + ADP. Its pathway is amino-acid biosynthesis; L-arginine biosynthesis; N(2)-acetyl-L-ornithine from L-glutamate: step 2/4. Catalyzes the ATP-dependent phosphorylation of N-acetyl-L-glutamate. The sequence is that of Acetylglutamate kinase from Chelativorans sp. (strain BNC1).